The primary structure comprises 1040 residues: Multidrug resistance protein MdtB (1040 aa).

12 helical membrane-spanning segments follow: residues 16–36, 347–367, 369–389, 396–416, 440–460, 472–492, 537–557, 863–883, 888–908, 911–931, 968–988, and 998–1018; these read FIMR…AGII, LMMA…NIPA, IIPG…MVFL, LTLM…IVVI, IGFT…PLLF, FAIT…TLTP, WLTL…WVFI, LGST…VLGI, FIHP…ALLA, IAGS…IGIV, ILMT…STGV, and IGMV…TPVI.

It belongs to the resistance-nodulation-cell division (RND) (TC 2.A.6) family. MdtB subfamily. Part of a tripartite efflux system composed of MdtA, MdtB and MdtC. MdtB forms a heteromultimer with MdtC.

It is found in the cell inner membrane. The MdtABC tripartite complex confers resistance against novobiocin and deoxycholate. The polypeptide is Multidrug resistance protein MdtB (Escherichia coli O157:H7 (strain EC4115 / EHEC)).